The primary structure comprises 372 residues: Anhydro-N-acetylmuramic acid kinase (372 aa).

Residue 18-25 participates in ATP binding; that stretch reads GTSLDGID.

This sequence belongs to the anhydro-N-acetylmuramic acid kinase family.

The enzyme catalyses 1,6-anhydro-N-acetyl-beta-muramate + ATP + H2O = N-acetyl-D-muramate 6-phosphate + ADP + H(+). The protein operates within amino-sugar metabolism; 1,6-anhydro-N-acetylmuramate degradation. It functions in the pathway cell wall biogenesis; peptidoglycan recycling. In terms of biological role, catalyzes the specific phosphorylation of 1,6-anhydro-N-acetylmuramic acid (anhMurNAc) with the simultaneous cleavage of the 1,6-anhydro ring, generating MurNAc-6-P. Is required for the utilization of anhMurNAc either imported from the medium or derived from its own cell wall murein, and thus plays a role in cell wall recycling. This chain is Anhydro-N-acetylmuramic acid kinase, found in Thiobacillus denitrificans (strain ATCC 25259 / T1).